Consider the following 210-residue polypeptide: Dof zinc finger protein DOF4.4 (210 aa).

The segment at 24–78 (RVCPRCDSDNTKFCFYNNYSESQPRYFCKNCRRYWTHGGALRNIPVGGSCRKPKR) adopts a Dof-type zinc-finger fold. Zn(2+) is bound by residues Cys26, Cys29, Cys51, and Cys54.

The protein resides in the nucleus. In terms of biological role, transcription factor that binds specifically to a 5'-AA[AG]G-3' consensus core sequence. The polypeptide is Dof zinc finger protein DOF4.4 (DOF4.4) (Arabidopsis thaliana (Mouse-ear cress)).